The chain runs to 333 residues: Transcription initiation factor IIB (333 aa).

A TFIIB-type zinc finger spans residues 33-64; the sequence is EVYKCPICGNDKFVYNYERGEAVCIVCGAVVQ. Zn(2+) contacts are provided by C37, C40, C56, and C59. 2 tandem repeats follow at residues 149–232 and 243–324.

Belongs to the TFIIB family.

Its function is as follows. Stabilizes TBP binding to an archaeal box-A promoter. Also responsible for recruiting RNA polymerase II to the pre-initiation complex (DNA-TBP-TFIIB). This is Transcription initiation factor IIB from Pyrobaculum aerophilum (strain ATCC 51768 / DSM 7523 / JCM 9630 / CIP 104966 / NBRC 100827 / IM2).